The primary structure comprises 500 residues: tRNA nucleotidyltransferase cca1 (500 aa).

Residues 122–139 are flexible loop; that stretch reads DYTNSNSSNKLVFGTPLE. An ERhxxExxxhh motif motif is present at residues 231–241; it reads ERIGVEVDKML.

This sequence belongs to the tRNA nucleotidyltransferase/poly(A) polymerase family.

It carries out the reaction a tRNA precursor + 2 CTP = a tRNA with a 3' CC end + 2 diphosphate. TRNA nucleotidyltransferase involved in the synthesis of the tRNA CCA terminus. In contrast to what is usually observed in eukaryotes for which one enzyme synthesizes the whole tRNA CCA terminus, in S.pombe, cca1 specifically adds two cytidine residues to a tRNA substrate lacking this sequence while cca2 specifically adds the terminal adenosine residue thereby completing the CCA sequence. The sequence is that of tRNA nucleotidyltransferase cca1 from Schizosaccharomyces pombe (strain 972 / ATCC 24843) (Fission yeast).